The sequence spans 857 residues: Glucans biosynthesis glucosyltransferase H (857 aa).

A run of 6 helical transmembrane segments spans residues 142 to 162, 196 to 216, 515 to 535, 572 to 592, 606 to 626, and 682 to 702; these read ILLT…KGIL, ILIL…TALM, VFLT…FLVL, LFST…ILIW, TLSM…RMIF, and FLWW…VSVI.

The protein belongs to the glycosyltransferase 2 family. OpgH subfamily.

It localises to the cell inner membrane. It participates in glycan metabolism; osmoregulated periplasmic glucan (OPG) biosynthesis. Its function is as follows. Involved in the biosynthesis of osmoregulated periplasmic glucans (OPGs). The chain is Glucans biosynthesis glucosyltransferase H from Pseudomonas putida (strain W619).